The sequence spans 1219 residues: DNA ligase 4 (1219 aa).

11 residues coordinate ATP: glutamate 251, lysine 253, arginine 258, arginine 273, glutamate 303, phenylalanine 342, glutamate 418, lysine 423, arginine 434, lysine 440, and lysine 442. Lysine 253 acts as the N6-AMP-lysine intermediate in catalysis. Position 303 (glutamate 303) interacts with Mg(2+). Glutamate 418 is a Mg(2+) binding site. Residues 604-632 (NGTTQKQKESESTQDNPKVNKSSKRGEKK) form a disordered region. 2 BRCT domains span residues 651 to 739 (GKTS…PKYF) and 807 to 909 (VYFY…VYTL). Disordered regions lie at residues 914-1126 (MEES…MDMK) and 1146-1197 (IPSQ…SDVV). Polar residues predominate over residues 932–960 (VASQGSAQTKEPASSKIAITSSRGRSNTR). The span at 1042 to 1051 (QRSRRGKKAA) shows a compositional bias: basic residues. Over residues 1056–1065 (DESDENDELD) the composition is skewed to acidic residues. Composition is skewed to basic and acidic residues over residues 1084-1096 (VENE…DIAK) and 1117-1126 (RNAKTEMDMK). Residues 1148–1159 (SQKTTETSNRTT) are compositionally biased toward polar residues.

The protein belongs to the ATP-dependent DNA ligase family. In terms of assembly, interacts with XRCC4 via its tandem BRCT domains. Interacts with POLL. Mg(2+) is required as a cofactor. Widely expressed, with higher levels in young flowers and roots.

It localises to the nucleus. The enzyme catalyses ATP + (deoxyribonucleotide)n-3'-hydroxyl + 5'-phospho-(deoxyribonucleotide)m = (deoxyribonucleotide)n+m + AMP + diphosphate.. Functionally, DNA ligase involved in DNA non-homologous end joining (NHEJ); required for double-strand break (DSB) repair. May be involved for T-DNA integration even if not absolutely required. Seems to be dispensable under normal growth conditions. The protein is DNA ligase 4 (LIG4) of Arabidopsis thaliana (Mouse-ear cress).